The chain runs to 283 residues: E3 ubiquitin-protein ligase SGR9, amyloplastic (283 aa).

The transit peptide at 1–32 directs the protein to the amyloplast; sequence MEDENTTIIMASLSALSPSHLTNLTHSILSIS. The RING-type; atypical zinc finger occupies 214-255; sequence CVICKEEMSEGRDVCEMPCQHFFHWKCILPWLSKKNTCPFCR.

Post-translationally, auto-ubiquitinated as part of the enzymatic reaction. As to expression, expressed in seedlings, hypocotyls, roots and stems. Present especially in hypocotyl and inflorescence endodermis, as well as in root cap columella, tissues that act as statocytes.

The protein resides in the plastid. The protein localises to the amyloplast. The enzyme catalyses S-ubiquitinyl-[E2 ubiquitin-conjugating enzyme]-L-cysteine + [acceptor protein]-L-lysine = [E2 ubiquitin-conjugating enzyme]-L-cysteine + N(6)-ubiquitinyl-[acceptor protein]-L-lysine.. Its pathway is protein modification; protein ubiquitination. In terms of biological role, E3 ubiquitin-protein ligase which accepts ubiquitin from an E2 ubiquitin-conjugating enzyme in the form of a thioester and then directly transfers the ubiquitin to targeted substrates. Modulates amyloplast dynamics and sedimentation in statocytes during inflorescence, hypocotyl and root gravitropism, probably by regulating amyloplast interaction with actin filaments (AFs) in endodermal cells. The sequence is that of E3 ubiquitin-protein ligase SGR9, amyloplastic (SGR9) from Arabidopsis thaliana (Mouse-ear cress).